Here is a 236-residue protein sequence, read N- to C-terminus: 2-C-methyl-D-erythritol 4-phosphate cytidylyltransferase (236 aa).

This sequence belongs to the IspD/TarI cytidylyltransferase family. IspD subfamily. As to quaternary structure, homodimer.

It catalyses the reaction 2-C-methyl-D-erythritol 4-phosphate + CTP + H(+) = 4-CDP-2-C-methyl-D-erythritol + diphosphate. The protein operates within isoprenoid biosynthesis; isopentenyl diphosphate biosynthesis via DXP pathway; isopentenyl diphosphate from 1-deoxy-D-xylulose 5-phosphate: step 2/6. Catalyzes the formation of 4-diphosphocytidyl-2-C-methyl-D-erythritol from CTP and 2-C-methyl-D-erythritol 4-phosphate (MEP). The protein is 2-C-methyl-D-erythritol 4-phosphate cytidylyltransferase of Cronobacter sakazakii (strain ATCC BAA-894) (Enterobacter sakazakii).